The following is a 291-amino-acid chain: Phytanoyl-CoA dioxygenase domain-containing protein 1 (291 aa).

2-oxoglutarate contacts are provided by residues Lys102, Met141, 156–158 (HQD), and Trp174. Residues His156 and Asp158 each coordinate Fe cation. His246 serves as a coordination point for Fe cation. Positions 248 and 257 each coordinate 2-oxoglutarate.

The protein belongs to the PhyH family. PHYHD1 subfamily. The cofactor is Fe cation.

Functionally, 2-oxoglutarate(2OG)-dependent dioxygenase that catalyzes the conversion of 2-oxoglutarate to succinate and CO(2) in an iron-dependent manner. However, does not couple 2OG turnover to the hydroxylation of acyl-coenzyme A derivatives, implying that it is not directly involved in phytanoyl coenzyme-A metabolism. Does not show detectable activity towards fatty acid CoA thioesters. The polypeptide is Phytanoyl-CoA dioxygenase domain-containing protein 1 (phyhd1) (Danio rerio (Zebrafish)).